Here is a 731-residue protein sequence, read N- to C-terminus: Auxin response factor 3 (731 aa).

Residues 1-22 (MASSASSSSSPSSRPPLMALPS) show a composition bias toward low complexity. The interval 1–41 (MASSASSSSSPSSRPPLMALPSFYRPPWPSERGGEQRATDC) is disordered. A DNA-binding region (TF-B3) is located at residues 191–293 (FCKTLTASDT…ELRLGVRRAT (103 aa)).

The protein belongs to the ARF family. In terms of assembly, homo and heterodimers. In terms of tissue distribution, expressed in roots, culms, leaves and young panicles.

Its subcellular location is the nucleus. In terms of biological role, auxin response factors (ARFs) are transcriptional factors that bind specifically to the DNA sequence 5'-TGTCTC-3' found in the auxin-responsive promoter elements (AuxREs). The chain is Auxin response factor 3 (ARF3) from Oryza sativa subsp. japonica (Rice).